A 688-amino-acid polypeptide reads, in one-letter code: Lipase (688 aa).

An N-terminal signal peptide occupies residues 1-35 (MKTRQNKYSIRKFSVGASSILIAALLFMGGGSAQA). Residues 31–309 (GSAQAAEQQQ…KSAKQKQYKN (279 aa)) are disordered. A propeptide spans 36–302 (AEQQQDKGTV…KNEDQTNKSA (267 aa)) (removed in mature form). The span at 45–54 (VENSTTQSIG) shows a compositional bias: polar residues. Residues 68 to 79 (NKNVNEKSNVNS) show a composition bias toward low complexity. 2 stretches are compositionally biased toward basic and acidic residues: residues 84 to 95 (ESLHNETPKNED) and 103 to 143 (SQND…KHAS). The segment covering 144–172 (ENNQTLHSKAAQSNEDVKTKPSQLDNTAA) has biased composition (polar residues). The segment covering 173-183 (KQEDSQKENLS) has biased composition (basic and acidic residues). Residues 184-211 (KQDTQSSKTTDLLRATAQNQSKDSQSTE) show a composition bias toward polar residues. Residues 240-267 (SKEEPLKVDKQANPTTDKDKSSKNDKGS) are compositionally biased toward basic and acidic residues. The span at 274–289 (LESNAVATTNKQSKQQ) shows a compositional bias: polar residues. Serine 418 acts as the Nucleophile in catalysis. Residue aspartate 609 is the Charge relay system of the active site. Residue aspartate 647 participates in Ca(2+) binding. Histidine 648 (charge relay system) is an active-site residue. Residues aspartate 650, aspartate 655, and aspartate 658 each coordinate Ca(2+).

The protein belongs to the AB hydrolase superfamily. Lipase family.

The protein localises to the secreted. It carries out the reaction a triacylglycerol + H2O = a diacylglycerol + a fatty acid + H(+). The protein is Lipase (lip) of Staphylococcus epidermidis (strain ATCC 12228 / FDA PCI 1200).